The sequence spans 182 residues: Endoribonuclease YbeY (182 aa).

Zn(2+) contacts are provided by His-115, His-119, and His-125.

It belongs to the endoribonuclease YbeY family. The cofactor is Zn(2+).

Its subcellular location is the cytoplasm. In terms of biological role, single strand-specific metallo-endoribonuclease involved in late-stage 70S ribosome quality control and in maturation of the 3' terminus of the 16S rRNA. The chain is Endoribonuclease YbeY from Bifidobacterium longum (strain NCC 2705).